We begin with the raw amino-acid sequence, 285 residues long: Complement C1q tumor necrosis factor-related protein 2 (285 aa).

A signal peptide spans Met-1–Ala-15. Residues Gln-33 to Gly-144 form a disordered region. Positions Gly-40 to Cys-141 constitute a Collagen-like domain. A compositionally biased stretch (pro residues) spans Pro-41–Pro-51. Residues Pro-53–Lys-65 show a composition bias toward low complexity. The segment covering Asp-66–Ser-78 has biased composition (basic and acidic residues). Over residues Pro-84 to His-120 the composition is skewed to low complexity. The C1q domain occupies Ser-145–Asp-281.

In terms of assembly, may interact with ERFE. In terms of tissue distribution, expressed in adipose tissue.

It is found in the secreted. Its function is as follows. Involved in the regulation of lipid metabolism in adipose tissue and liver. This chain is Complement C1q tumor necrosis factor-related protein 2 (C1QTNF2), found in Homo sapiens (Human).